Consider the following 300-residue polypeptide: Acetaldehyde dehydrogenase (300 aa).

11–14 (SGNI) lines the NAD(+) pocket. Cys129 acts as the Acyl-thioester intermediate in catalysis. NAD(+) contacts are provided by residues 160 to 168 (SVGPGTRQN) and Asn271.

It belongs to the acetaldehyde dehydrogenase family.

It catalyses the reaction acetaldehyde + NAD(+) + CoA = acetyl-CoA + NADH + H(+). The protein is Acetaldehyde dehydrogenase (mhpF) of Pseudoalteromonas translucida (strain TAC 125).